The chain runs to 336 residues: Iron(3+)-hydroxamate import system permease protein FhuG (336 aa).

9 consecutive transmembrane segments (helical) span residues L9–L29, I63–V83, P91–F111, F124–L144, L155–L175, I193–L213, I245–A265, T285–A305, and E313–M333.

This sequence belongs to the binding-protein-dependent transport system permease family. FecCD subfamily. In terms of assembly, the complex is composed of an ATP-binding protein (FhuC), two transmembrane proteins (FhuB and FhuG) and a solute-binding protein (FhuD or YxeB).

Its subcellular location is the cell membrane. In terms of biological role, part of the ABC transporter complex FhuBGCD involved in iron(3+)-hydroxamate import. Responsible for the translocation of the substrate across the membrane. The polypeptide is Iron(3+)-hydroxamate import system permease protein FhuG (fhuG) (Bacillus subtilis (strain 168)).